The sequence spans 141 residues: Hemoglobin subunit alpha (141 aa).

Residues 1-141 (VLSGEDKNNI…VSTVLTSKYR (141 aa)) enclose the Globin domain. Position 3 is a phosphoserine (Ser3). An N6-succinyllysine mark is found at Lys7 and Lys11. Lys16 carries the post-translational modification N6-acetyllysine; alternate. The residue at position 16 (Lys16) is an N6-succinyllysine; alternate. Tyr24 is subject to Phosphotyrosine. N6-succinyllysine is present on Lys40. At Ser49 the chain carries Phosphoserine. His58 is a binding site for O2. Position 87 (His87) interacts with heme b. The residue at position 102 (Ser102) is a Phosphoserine. Thr108 is subject to Phosphothreonine. A phosphoserine mark is found at Ser124 and Ser131. A phosphothreonine mark is found at Thr134 and Thr137. Ser138 carries the phosphoserine modification.

The protein belongs to the globin family. In terms of assembly, heterotetramer of two alpha chains and two beta chains. As to expression, red blood cells.

Functionally, involved in oxygen transport from the lung to the various peripheral tissues. Its function is as follows. Hemopressin acts as an antagonist peptide of the cannabinoid receptor CNR1. Hemopressin-binding efficiently blocks cannabinoid receptor CNR1 and subsequent signaling. This Ondatra zibethicus (Muskrat) protein is Hemoglobin subunit alpha (HBA).